Reading from the N-terminus, the 254-residue chain is Ribonuclease 3 (254 aa).

Positions 24 to 154 (LRRLQETLGV…VIGALFLDSG (131 aa)) constitute an RNase III domain. Mg(2+) is bound at residue Glu-67. The active site involves Asp-71. Mg(2+)-binding residues include Asp-140 and Glu-143. Glu-143 is a catalytic residue. The DRBM domain maps to 181 to 250 (DYKSTLQVLA…ARLAWEQLSG (70 aa)).

The protein belongs to the ribonuclease III family. As to quaternary structure, homodimer. The cofactor is Mg(2+).

Its subcellular location is the cytoplasm. It catalyses the reaction Endonucleolytic cleavage to 5'-phosphomonoester.. Digests double-stranded RNA. Involved in the processing of primary rRNA transcript to yield the immediate precursors to the large and small rRNAs (23S and 16S). Processes some mRNAs, and tRNAs when they are encoded in the rRNA operon. Processes pre-crRNA and tracrRNA of type II CRISPR loci if present in the organism. This chain is Ribonuclease 3, found in Treponema pallidum (strain Nichols).